The primary structure comprises 311 residues: Protease HtpX homolog 1 (311 aa).

2 helical membrane-spanning segments follow: residues 12–32 and 35–55; these read IIALFLTIVSEGIFSLVIINF and FPVIFSIIFLLILWLIQWLIS. Histidine 137 contributes to the Zn(2+) binding site. Glutamate 138 is an active-site residue. Histidine 141 lines the Zn(2+) pocket. 2 helical membrane passes run 159 to 179 and 184 to 204; these read ILGFISNILLTVGWATLIFAV and ILVGLTMLAIGGVLFVITFFL. Glutamate 216 serves as a coordination point for Zn(2+).

This sequence belongs to the peptidase M48B family. Zn(2+) serves as cofactor.

The protein localises to the cell membrane. The chain is Protease HtpX homolog 1 from Sulfurisphaera tokodaii (strain DSM 16993 / JCM 10545 / NBRC 100140 / 7) (Sulfolobus tokodaii).